The sequence spans 457 residues: Dynein regulatory complex protein 10 (457 aa).

Coiled coils occupy residues 101 to 127, 209 to 258, and 292 to 381; these read EKAS…DQER, IQDI…LHQV, and QQDI…AESE. An IQ domain is found at 397-426; the sequence is MVRAATLIQAMWKGYLVRSMLRSRKKKRVK. Positions 419 to 457 are disordered; it reads SRKKKRVKSKGKDKGKGKEKPKEEKGKEKKAKGKGKGKK. Residues 428–445 are compositionally biased toward basic and acidic residues; sequence KGKDKGKGKEKPKEEKGK. Over residues 446 to 457 the composition is skewed to basic residues; sequence EKKAKGKGKGKK.

It belongs to the DRC10 family. As to quaternary structure, component of the nexin-dynein regulatory complex (N-DRC). Interacts with CFAP52.

It is found in the cytoplasm. It localises to the cytoskeleton. The protein localises to the flagellum axoneme. Its function is as follows. Component of the nexin-dynein regulatory complex (N-DRC), a key regulator of ciliary/flagellar motility which maintains the alignment and integrity of the distal axoneme and regulates microtubule sliding in motile axonemes. This Rattus norvegicus (Rat) protein is Dynein regulatory complex protein 10 (Iqcd).